The primary structure comprises 1025 residues: Multidrug resistance protein MdtC (1025 aa).

12 helical membrane-spanning segments follow: residues 16–36 (LLTL…PVAP), 333–353 (EVEQ…FVFL), 360–380 (LIPA…MYLC), 387–407 (LSLM…IVVL), 431–451 (VGFT…PLLM), 459–479 (FFAE…FVSV), 528–548 (WVLL…ISIP), 853–873 (LWLM…LYES), 875–895 (VHPL…LLAL), 897–917 (LFDT…IGIV), 953–973 (PILM…LTSG), and 984–1004 (ITIA…TPVV).

The protein belongs to the resistance-nodulation-cell division (RND) (TC 2.A.6) family. MdtC subfamily. In terms of assembly, part of a tripartite efflux system composed of MdtA, MdtB and MdtC. MdtC forms a heteromultimer with MdtB.

The protein localises to the cell inner membrane. In Pantoea ananatis (strain AJ13355), this protein is Multidrug resistance protein MdtC.